Reading from the N-terminus, the 37-residue chain is Large ribosomal subunit protein bL36 (37 aa).

The protein belongs to the bacterial ribosomal protein bL36 family.

The polypeptide is Large ribosomal subunit protein bL36 (Metamycoplasma arthritidis (strain 158L3-1) (Mycoplasma arthritidis)).